We begin with the raw amino-acid sequence, 306 residues long: Transcription initiation factor IIB 2 (306 aa).

The TFIIB-type zinc finger occupies 6–37; that stretch reads PKRVCPICGSTEFIYDPRRGEIVCAKCGYVIE. Residues Cys10, Cys13, Cys29, and Cys32 each contribute to the Zn(2+) site. A run of 2 repeats spans residues 123–206 and 217–298.

The protein belongs to the TFIIB family.

Its function is as follows. Stabilizes TBP binding to an archaeal box-A promoter. Also responsible for recruiting RNA polymerase II to the pre-initiation complex (DNA-TBP-TFIIB). The protein is Transcription initiation factor IIB 2 of Thermococcus kodakarensis (strain ATCC BAA-918 / JCM 12380 / KOD1) (Pyrococcus kodakaraensis (strain KOD1)).